Reading from the N-terminus, the 240-residue chain is Leucyl/phenylalanyl-tRNA--protein transferase (240 aa).

The protein belongs to the L/F-transferase family.

Its subcellular location is the cytoplasm. It catalyses the reaction N-terminal L-lysyl-[protein] + L-leucyl-tRNA(Leu) = N-terminal L-leucyl-L-lysyl-[protein] + tRNA(Leu) + H(+). The catalysed reaction is N-terminal L-arginyl-[protein] + L-leucyl-tRNA(Leu) = N-terminal L-leucyl-L-arginyl-[protein] + tRNA(Leu) + H(+). It carries out the reaction L-phenylalanyl-tRNA(Phe) + an N-terminal L-alpha-aminoacyl-[protein] = an N-terminal L-phenylalanyl-L-alpha-aminoacyl-[protein] + tRNA(Phe). Functionally, functions in the N-end rule pathway of protein degradation where it conjugates Leu, Phe and, less efficiently, Met from aminoacyl-tRNAs to the N-termini of proteins containing an N-terminal arginine or lysine. The polypeptide is Leucyl/phenylalanyl-tRNA--protein transferase (Maridesulfovibrio salexigens (strain ATCC 14822 / DSM 2638 / NCIMB 8403 / VKM B-1763) (Desulfovibrio salexigens)).